We begin with the raw amino-acid sequence, 341 residues long: Ferrochelatase (341 aa).

Fe cation-binding residues include histidine 189 and glutamate 293.

Belongs to the ferrochelatase family.

The protein localises to the cytoplasm. The enzyme catalyses heme b + 2 H(+) = protoporphyrin IX + Fe(2+). The protein operates within porphyrin-containing compound metabolism; protoheme biosynthesis; protoheme from protoporphyrin-IX: step 1/1. Functionally, catalyzes the ferrous insertion into protoporphyrin IX. The chain is Ferrochelatase from Pseudomonas fluorescens (strain Pf0-1).